The primary structure comprises 297 residues: Ribosomal RNA small subunit methyltransferase H (297 aa).

S-adenosyl-L-methionine contacts are provided by residues 37–39, Glu56, Phe87, Asp102, and His109; that span reads GGH.

Belongs to the methyltransferase superfamily. RsmH family.

It is found in the cytoplasm. It catalyses the reaction cytidine(1402) in 16S rRNA + S-adenosyl-L-methionine = N(4)-methylcytidine(1402) in 16S rRNA + S-adenosyl-L-homocysteine + H(+). Functionally, specifically methylates the N4 position of cytidine in position 1402 (C1402) of 16S rRNA. The chain is Ribosomal RNA small subunit methyltransferase H from Borrelia recurrentis (strain A1).